Reading from the N-terminus, the 266-residue chain is MIQITVVQIDNYGPWTVTPNPRRESDLQALQSRLYCDMNLQFGAHRGLAFYTRFDNIIAITNGIDLETHKRIQNSVKNRYPFTVSMAVASAETAYGAQKLATKTIQEYGSAQDDVRKEVLDVANEFVSNGYVQLAHVDINDITGKLTDLETAYDTYLSVQKTKLKLMEELKKYDSLGFFIGGDNFMCPCNGMSEKDFLCMFEDIKESCGIELKAGIGIGKTAEDASDLADIGLEVIREGKTDFQVYTLKQDVEERKDVTYNYMCPI.

The protein belongs to the archaeal-type GTP cyclohydrolase family.

The enzyme catalyses GTP + 3 H2O = 2-amino-5-formylamino-6-(5-phospho-D-ribosylamino)pyrimidin-4(3H)-one + 2 phosphate + 2 H(+). Catalyzes the formation of 2-amino-5-formylamino-6-ribofuranosylamino-4(3H)-pyrimidinone ribonucleotide monophosphate and inorganic phosphate from GTP. Also has an independent pyrophosphate phosphohydrolase activity. The polypeptide is GTP cyclohydrolase III (Methanococcus maripaludis (strain C5 / ATCC BAA-1333)).